Consider the following 338-residue polypeptide: Anthranilate phosphoribosyltransferase (338 aa).

5-phospho-alpha-D-ribose 1-diphosphate-binding positions include Gly81, 84-85 (GD), Thr89, 91-94 (NVST), 109-117 (KHGNRALSS), and Ala121. Anthranilate is bound at residue Gly81. Residue Ser93 coordinates Mg(2+). Asn112 serves as a coordination point for anthranilate. Position 167 (Arg167) interacts with anthranilate. Mg(2+)-binding residues include Asp225 and Glu226.

Belongs to the anthranilate phosphoribosyltransferase family. As to quaternary structure, homodimer. Requires Mg(2+) as cofactor.

The catalysed reaction is N-(5-phospho-beta-D-ribosyl)anthranilate + diphosphate = 5-phospho-alpha-D-ribose 1-diphosphate + anthranilate. Its pathway is amino-acid biosynthesis; L-tryptophan biosynthesis; L-tryptophan from chorismate: step 2/5. Functionally, catalyzes the transfer of the phosphoribosyl group of 5-phosphorylribose-1-pyrophosphate (PRPP) to anthranilate to yield N-(5'-phosphoribosyl)-anthranilate (PRA). In Chelativorans sp. (strain BNC1), this protein is Anthranilate phosphoribosyltransferase.